We begin with the raw amino-acid sequence, 432 residues long: Adenylosuccinate synthetase (432 aa).

Residues 13–19 and 41–43 each bind GTP; these read GDEGKGK and GHT. Catalysis depends on aspartate 14, which acts as the Proton acceptor. Positions 14 and 41 each coordinate Mg(2+). IMP contacts are provided by residues 14–17, 39–42, threonine 130, arginine 144, glutamine 225, threonine 240, and arginine 304; these read DEGK and NAGH. Histidine 42 functions as the Proton donor in the catalytic mechanism. 300-306 is a binding site for substrate; that stretch reads ATTGRSR. Residues arginine 306, 332-334, and 415-417 each bind GTP; these read KLD and STG.

The protein belongs to the adenylosuccinate synthetase family. As to quaternary structure, homodimer. Requires Mg(2+) as cofactor.

It localises to the cytoplasm. The enzyme catalyses IMP + L-aspartate + GTP = N(6)-(1,2-dicarboxyethyl)-AMP + GDP + phosphate + 2 H(+). The protein operates within purine metabolism; AMP biosynthesis via de novo pathway; AMP from IMP: step 1/2. Its function is as follows. Plays an important role in the de novo pathway of purine nucleotide biosynthesis. Catalyzes the first committed step in the biosynthesis of AMP from IMP. This chain is Adenylosuccinate synthetase, found in Proteus mirabilis (strain HI4320).